A 432-amino-acid chain; its full sequence is Glutamyl-tRNA reductase (432 aa).

Substrate contacts are provided by residues 49–52 (TCNR), Ser101, 106–108 (ESQ), and Gln112. The active-site Nucleophile is Cys50. 181–186 (GAGETI) is an NADP(+) binding site. The disordered stretch occupies residues 410-432 (KPGYHHPTLQTTIVKTDETDPAS).

The protein belongs to the glutamyl-tRNA reductase family. As to quaternary structure, homodimer.

The catalysed reaction is (S)-4-amino-5-oxopentanoate + tRNA(Glu) + NADP(+) = L-glutamyl-tRNA(Glu) + NADPH + H(+). The protein operates within porphyrin-containing compound metabolism; protoporphyrin-IX biosynthesis; 5-aminolevulinate from L-glutamyl-tRNA(Glu): step 1/2. Its function is as follows. Catalyzes the NADPH-dependent reduction of glutamyl-tRNA(Glu) to glutamate 1-semialdehyde (GSA). The chain is Glutamyl-tRNA reductase from Xylella fastidiosa (strain M23).